A 429-amino-acid polypeptide reads, in one-letter code: Formate-dependent phosphoribosylglycinamide formyltransferase (429 aa).

N(1)-(5-phospho-beta-D-ribosyl)glycinamide contacts are provided by residues 26–27 (EL) and Glu-86. ATP contacts are provided by residues Arg-118, Lys-159, 199–202 (EEHI), and Glu-207. One can recognise an ATP-grasp domain in the interval 123-319 (ETLVKEAKVP…EFGLHLRAVL (197 aa)). Residues Glu-276 and Glu-288 each coordinate Mg(2+). N(1)-(5-phospho-beta-D-ribosyl)glycinamide is bound by residues Asp-295, Lys-375, and 382–383 (RR).

It belongs to the PurK/PurT family. As to quaternary structure, homodimer.

It catalyses the reaction N(1)-(5-phospho-beta-D-ribosyl)glycinamide + formate + ATP = N(2)-formyl-N(1)-(5-phospho-beta-D-ribosyl)glycinamide + ADP + phosphate + H(+). Its pathway is purine metabolism; IMP biosynthesis via de novo pathway; N(2)-formyl-N(1)-(5-phospho-D-ribosyl)glycinamide from N(1)-(5-phospho-D-ribosyl)glycinamide (formate route): step 1/1. In terms of biological role, involved in the de novo purine biosynthesis. Catalyzes the transfer of formate to 5-phospho-ribosyl-glycinamide (GAR), producing 5-phospho-ribosyl-N-formylglycinamide (FGAR). Formate is provided by PurU via hydrolysis of 10-formyl-tetrahydrofolate. The polypeptide is Formate-dependent phosphoribosylglycinamide formyltransferase (Pyrococcus furiosus (strain ATCC 43587 / DSM 3638 / JCM 8422 / Vc1)).